The chain runs to 242 residues: UPF0173 metal-dependent hydrolase APE_1117 (242 aa).

Belongs to the UPF0173 family.

The chain is UPF0173 metal-dependent hydrolase APE_1117 from Aeropyrum pernix (strain ATCC 700893 / DSM 11879 / JCM 9820 / NBRC 100138 / K1).